Reading from the N-terminus, the 397-residue chain is GTPase Obg (397 aa).

The region spanning Met1–Leu159 is the Obg domain. The interval Thr128–Glu148 is disordered. Residues Arg129–Gly144 are compositionally biased toward polar residues. Residues Ala160–Glu333 form the OBG-type G domain. GTP-binding positions include Gly166–Ser173, Phe191–Val195, Asp213–Gly216, Asn283–Asp286, and Ser314–Leu316. Ser173 and Thr193 together coordinate Mg(2+). The span at Ala336–Glu347 shows a compositional bias: acidic residues. The interval Ala336 to Glu397 is disordered. Basic and acidic residues predominate over residues Glu349–Ala370. A compositionally biased stretch (acidic residues) spans Asp378–Val390.

The protein belongs to the TRAFAC class OBG-HflX-like GTPase superfamily. OBG GTPase family. In terms of assembly, monomer. It depends on Mg(2+) as a cofactor.

It localises to the cytoplasm. In terms of biological role, an essential GTPase which binds GTP, GDP and possibly (p)ppGpp with moderate affinity, with high nucleotide exchange rates and a fairly low GTP hydrolysis rate. Plays a role in control of the cell cycle, stress response, ribosome biogenesis and in those bacteria that undergo differentiation, in morphogenesis control. This chain is GTPase Obg, found in Marinobacter nauticus (strain ATCC 700491 / DSM 11845 / VT8) (Marinobacter aquaeolei).